The chain runs to 293 residues: Pantothenate synthetase (293 aa).

Residue methionine 30–histidine 37 coordinates ATP. Histidine 37 functions as the Proton donor in the catalytic mechanism. A (R)-pantoate-binding site is contributed by glutamine 61. Glutamine 61 provides a ligand contact to beta-alanine. Residue glycine 147–aspartate 150 participates in ATP binding. Glutamine 153 serves as a coordination point for (R)-pantoate. ATP-binding positions include valine 176 and cysteine 184–arginine 187.

The protein belongs to the pantothenate synthetase family. Homodimer.

Its subcellular location is the cytoplasm. The enzyme catalyses (R)-pantoate + beta-alanine + ATP = (R)-pantothenate + AMP + diphosphate + H(+). Its pathway is cofactor biosynthesis; (R)-pantothenate biosynthesis; (R)-pantothenate from (R)-pantoate and beta-alanine: step 1/1. Functionally, catalyzes the condensation of pantoate with beta-alanine in an ATP-dependent reaction via a pantoyl-adenylate intermediate. In Brucella canis (strain ATCC 23365 / NCTC 10854 / RM-666), this protein is Pantothenate synthetase.